The chain runs to 99 residues: DNA-directed RNA polymerase subunit omega (99 aa).

Belongs to the RNA polymerase subunit omega family. As to quaternary structure, the RNAP catalytic core consists of 2 alpha, 1 beta, 1 beta' and 1 omega subunit. When a sigma factor is associated with the core the holoenzyme is formed, which can initiate transcription.

The enzyme catalyses RNA(n) + a ribonucleoside 5'-triphosphate = RNA(n+1) + diphosphate. Promotes RNA polymerase assembly. Latches the N- and C-terminal regions of the beta' subunit thereby facilitating its interaction with the beta and alpha subunits. The sequence is that of DNA-directed RNA polymerase subunit omega from Xanthomonas axonopodis pv. citri (strain 306).